Reading from the N-terminus, the 1058-residue chain is Carbamoyl phosphate synthase large chain (1058 aa).

The segment at 1-401 (MPKRKDIQKI…SLLKACRSLE (401 aa)) is carboxyphosphate synthetic domain. ATP is bound by residues arginine 129, arginine 169, glycine 175, glycine 176, arginine 208, isoleucine 210, glutamate 215, glycine 241, isoleucine 242, histidine 243, glutamine 284, and glutamate 298. Residues 133–327 (KQLMQELDQP…IAKLAAKIAV (195 aa)) form the ATP-grasp 1 domain. 3 residues coordinate Mg(2+): glutamine 284, glutamate 298, and asparagine 300. Positions 284, 298, and 300 each coordinate Mn(2+). Residues 402–546 (IGVCHNEMTS…YSTYELENES (145 aa)) form an oligomerization domain region. Positions 547-929 (VQSNKESILV…ALYKAFEANN (383 aa)) are carbamoyl phosphate synthetic domain. An ATP-grasp 2 domain is found at 671–861 (EKALKELGIP…MAQIATKLIL (191 aa)). Positions 707, 746, 748, 752, 777, 778, 779, 780, 820, and 832 each coordinate ATP. Positions 820, 832, and 834 each coordinate Mg(2+). Residues glutamine 820, glutamate 832, and asparagine 834 each contribute to the Mn(2+) site. The region spanning 930–1058 (SHLSEFGQIV…ESRCFNIEAI (129 aa)) is the MGS-like domain. The segment at 930–1058 (SHLSEFGQIV…ESRCFNIEAI (129 aa)) is allosteric domain.

Belongs to the CarB family. In terms of assembly, composed of two chains; the small (or glutamine) chain promotes the hydrolysis of glutamine to ammonia, which is used by the large (or ammonia) chain to synthesize carbamoyl phosphate. Tetramer of heterodimers (alpha,beta)4. Mg(2+) is required as a cofactor. Requires Mn(2+) as cofactor.

It carries out the reaction hydrogencarbonate + L-glutamine + 2 ATP + H2O = carbamoyl phosphate + L-glutamate + 2 ADP + phosphate + 2 H(+). The catalysed reaction is hydrogencarbonate + NH4(+) + 2 ATP = carbamoyl phosphate + 2 ADP + phosphate + 2 H(+). It participates in amino-acid biosynthesis; L-arginine biosynthesis; carbamoyl phosphate from bicarbonate: step 1/1. Its pathway is pyrimidine metabolism; UMP biosynthesis via de novo pathway; (S)-dihydroorotate from bicarbonate: step 1/3. Large subunit of the glutamine-dependent carbamoyl phosphate synthetase (CPSase). CPSase catalyzes the formation of carbamoyl phosphate from the ammonia moiety of glutamine, carbonate, and phosphate donated by ATP, constituting the first step of 2 biosynthetic pathways, one leading to arginine and/or urea and the other to pyrimidine nucleotides. The large subunit (synthetase) binds the substrates ammonia (free or transferred from glutamine from the small subunit), hydrogencarbonate and ATP and carries out an ATP-coupled ligase reaction, activating hydrogencarbonate by forming carboxy phosphate which reacts with ammonia to form carbamoyl phosphate. This Streptococcus pyogenes serotype M3 (strain ATCC BAA-595 / MGAS315) protein is Carbamoyl phosphate synthase large chain.